We begin with the raw amino-acid sequence, 265 residues long: Capsule polysaccharide export inner-membrane protein BexB (265 aa).

The next 6 membrane-spanning stretches (helical) occupy residues 37-57 (IGFFWLFVEPLLMTFFIVMMW), 64-84 (KFSTLNMIAFVMTGYPMAMMW), 118-138 (LLEVAGASIAQILFMAILVMI), 151-171 (LIAWFLMAMFAFGLGLIICAI), 178-198 (FGKIWGTLSFVLLPISGAFFF), and 235-255 (ESIGFLVVSDLALLLLGLVMV). The 222-residue stretch at 37–258 (IGFFWLFVEP…LLGLVMVKNF (222 aa)) folds into the ABC transmembrane type-2 domain.

Belongs to the ABC-2 integral membrane protein family.

The protein localises to the cell inner membrane. In terms of biological role, may form an ATP-driven capsule polysaccharide export apparatus, in association with the BexA, BexC and BexD proteins. This Haemophilus influenzae protein is Capsule polysaccharide export inner-membrane protein BexB (bexB).